The sequence spans 261 residues: Transmembrane protein 106A (261 aa).

A helical transmembrane segment spans residues 95 to 115; the sequence is VFLAVSICLVTSSLIIFFLFP.

The protein belongs to the TMEM106 family.

The protein resides in the cell membrane. Functionally, activates macrophages and polarizes them into M1-like macrophages through the activation of the MAPK and NF-kappaB signaling pathway. Upon activation, up-regulates the expression of CD80, CD86, CD69 and MHC II on macrophages, and induces the release of pro-inflammatory cytokines such as TNF, IL1B, IL6, CCL2 and nitric oxide. May play a role in inhibition of proliferation and migration. The protein is Transmembrane protein 106A (TMEM106A) of Bos taurus (Bovine).